The chain runs to 100 residues: Urease subunit gamma (100 aa).

Belongs to the urease gamma subunit family. Heterotrimer of UreA (gamma), UreB (beta) and UreC (alpha) subunits. Three heterotrimers associate to form the active enzyme.

The protein resides in the cytoplasm. It carries out the reaction urea + 2 H2O + H(+) = hydrogencarbonate + 2 NH4(+). Its pathway is nitrogen metabolism; urea degradation; CO(2) and NH(3) from urea (urease route): step 1/1. This chain is Urease subunit gamma, found in Staphylococcus saprophyticus subsp. saprophyticus (strain ATCC 15305 / DSM 20229 / NCIMB 8711 / NCTC 7292 / S-41).